A 457-amino-acid polypeptide reads, in one-letter code: Pup--protein ligase (457 aa).

E9 is a binding site for Mg(2+). Residue R53 participates in ATP binding. Y55 contributes to the Mg(2+) binding site. D57 functions as the Proton acceptor in the catalytic mechanism. E63 contacts Mg(2+). Residues T66 and W424 each coordinate ATP.

Belongs to the Pup ligase/Pup deamidase family. Pup-conjugating enzyme subfamily.

It carries out the reaction ATP + [prokaryotic ubiquitin-like protein]-L-glutamate + [protein]-L-lysine = ADP + phosphate + N(6)-([prokaryotic ubiquitin-like protein]-gamma-L-glutamyl)-[protein]-L-lysine.. It functions in the pathway protein degradation; proteasomal Pup-dependent pathway. The protein operates within protein modification; protein pupylation. In terms of biological role, catalyzes the covalent attachment of the prokaryotic ubiquitin-like protein modifier Pup to the proteasomal substrate proteins, thereby targeting them for proteasomal degradation. This tagging system is termed pupylation. The ligation reaction involves the side-chain carboxylate of the C-terminal glutamate of Pup and the side-chain amino group of a substrate lysine. The chain is Pup--protein ligase from Xylanimonas cellulosilytica (strain DSM 15894 / JCM 12276 / CECT 5975 / KCTC 9989 / LMG 20990 / NBRC 107835 / XIL07).